A 622-amino-acid chain; its full sequence is DNA-directed RNA polymerase subunit gamma (622 aa).

Zn(2+)-binding residues include Cys70, Cys72, Cys85, and Cys88. The Mg(2+) site is built by Asp466, Asp468, and Asp470.

This sequence belongs to the RNA polymerase beta' chain family. RpoC1 subfamily. In terms of assembly, in cyanobacteria the RNAP catalytic core is composed of 2 alpha, 1 beta, 1 beta', 1 gamma and 1 omega subunit. When a sigma factor is associated with the core the holoenzyme is formed, which can initiate transcription. Requires Mg(2+) as cofactor. The cofactor is Zn(2+).

The enzyme catalyses RNA(n) + a ribonucleoside 5'-triphosphate = RNA(n+1) + diphosphate. DNA-dependent RNA polymerase catalyzes the transcription of DNA into RNA using the four ribonucleoside triphosphates as substrates. In Thermosynechococcus vestitus (strain NIES-2133 / IAM M-273 / BP-1), this protein is DNA-directed RNA polymerase subunit gamma.